The primary structure comprises 499 residues: Glycerol kinase (499 aa).

Thr13 lines the ADP pocket. ATP-binding residues include Thr13, Thr14, and Ser15. Thr13 lines the sn-glycerol 3-phosphate pocket. ADP is bound at residue Arg17. Residues Arg83, Glu84, Tyr135, and Asp245 each contribute to the sn-glycerol 3-phosphate site. The glycerol site is built by Arg83, Glu84, Tyr135, Asp245, and Gln246. ADP contacts are provided by Thr267 and Gly310. ATP contacts are provided by Thr267, Gly310, Gln314, and Ala411. Residues Ala411 and Asn415 each contribute to the ADP site.

It belongs to the FGGY kinase family.

It carries out the reaction glycerol + ATP = sn-glycerol 3-phosphate + ADP + H(+). It functions in the pathway polyol metabolism; glycerol degradation via glycerol kinase pathway; sn-glycerol 3-phosphate from glycerol: step 1/1. Inhibited by fructose 1,6-bisphosphate (FBP). Key enzyme in the regulation of glycerol uptake and metabolism. Catalyzes the phosphorylation of glycerol to yield sn-glycerol 3-phosphate. This is Glycerol kinase from Xylella fastidiosa (strain 9a5c).